Consider the following 366-residue polypeptide: 15-cis-zeta-carotene isomerase, chloroplastic (366 aa).

The transit peptide at M1–L45 directs the protein to the chloroplast. Helical transmembrane passes span S94–I114, E136–L156, V171–H191, G203–Y223, V260–V280, and L338–Q358.

Expressed in leaves and roots, and at lower levels in embryos and endosperm.

It localises to the plastid. Its subcellular location is the chloroplast membrane. It catalyses the reaction 9,9',15-tri-cis-zeta-carotene = 9,9'-di-cis-zeta-carotene. Functionally, isomerase involved in the biosynthesis of carotenoids. Catalyzes the cis- to trans-conversion of the 15-cis-bond in 9,15,9'-tri-cis-zeta-carotene. The polypeptide is 15-cis-zeta-carotene isomerase, chloroplastic (Zea mays (Maize)).